An 899-amino-acid chain; its full sequence is Receptor-like protein kinase At3g21340 (899 aa).

Residues 1-27 (MEYHPQAIRLCALIFISFYALLHLVEA) form the signal peptide. Residues 28–522 (QDQKGFISLD…GAKKMNVVIP (495 aa)) lie on the Extracellular side of the membrane. Residues N100, N146, N185, N240, N266, N420, N436, N449, N468, and N475 are each glycosylated (N-linked (GlcNAc...) asparagine). LRR repeat units lie at residues 415-438 (IVTS…QNLT), 439-461 (HLQE…LADI), and 463-485 (SLLV…LLQK). Residues 523 to 543 (IVASVAFVVVLGSALAFFFIF) form a helical membrane-spanning segment. Residues 544 to 899 (KKKKTSNSQD…FDIGATPDAR (356 aa)) are Cytoplasmic-facing. Phosphothreonine is present on T583. Positions 592 to 865 (NNFERVLGKG…QVVIELNECL (274 aa)) constitute a Protein kinase domain. Residues 598–606 (LGKGGFGMV) and K620 each bind ATP. The residue at position 665 (Y665) is a Phosphotyrosine. D717 functions as the Proton acceptor in the catalytic mechanism. The residue at position 751 (S751) is a Phosphoserine. A phosphothreonine mark is found at T752 and T757. Residue Y765 is modified to Phosphotyrosine.

The protein belongs to the protein kinase superfamily. Ser/Thr protein kinase family. Autophosphorylated on Tyr and Thr residues.

It localises to the cell membrane. It catalyses the reaction L-seryl-[protein] + ATP = O-phospho-L-seryl-[protein] + ADP + H(+). The catalysed reaction is L-threonyl-[protein] + ATP = O-phospho-L-threonyl-[protein] + ADP + H(+). The enzyme catalyses L-tyrosyl-[protein] + ATP = O-phospho-L-tyrosyl-[protein] + ADP + H(+). Functionally, probable receptor with a dual specificity kinase activity acting on both serine/threonine- and tyrosine-containing substrates. This chain is Receptor-like protein kinase At3g21340, found in Arabidopsis thaliana (Mouse-ear cress).